The primary structure comprises 336 residues: P2Y purinoceptor 13 (336 aa).

Residues 1–32 (MLGTVNTTGMQGFNKSERCPRDTRMTQLLFPV) lie on the Extracellular side of the membrane. N-linked (GlcNAc...) asparagine glycosylation is found at N6 and N14. Residues 33–53 (LYTVVFFTGVLLNTLALWVFI) form a helical membrane-spanning segment. The Cytoplasmic segment spans residues 54-60 (HIPSNST). Residues 61–81 (FIIYLKNTLVADLIMTLMLPF) form a helical membrane-spanning segment. At 82–100 (KILSDSRLAPWQLRGFVCT) the chain is on the extracellular side. C99 and C176 form a disulfide bridge. Residues 101 to 121 (FSSVVFYETMYVGIMMLGLIA) traverse the membrane as a helical segment. The Cytoplasmic portion of the chain corresponds to 122–144 (FDRFLKIVVPFRKTFVKKTAFAK). A helical membrane pass occupies residues 145-165 (IVSISIWLLMFLISLPNMILN). Residues 166–193 (KEATASTVKKCASLKSPLGLLWHQVVSH) are Extracellular-facing. The helical transmembrane segment at 194-214 (TCQFIFWTVFILMLLFYTVIA) threads the bilayer. At 215–237 (KKVYDSYRKFKSRDSKHKRLEAK) the chain is on the cytoplasmic side. Residues 238 to 258 (VFIVMAVFFVCFAPFHFVRVP) traverse the membrane as a helical segment. Residues 259–281 (YTHSQTTNKTDCRLENQLFLAKE) are Extracellular-facing. Residue N266 is glycosylated (N-linked (GlcNAc...) asparagine). Residues 282–302 (STLFLATTNICMDPLIYIILC) form a helical membrane-spanning segment. Topologically, residues 303-336 (KKFTRKVPCMRWRTKTAASSDEHHSSQTDNITLS) are cytoplasmic.

It belongs to the G-protein coupled receptor 1 family. As to expression, highest levels in spleen, liver brain and kidney. Lower but significant level are also detected in intestine, stomach, skeletal muscle, testis, heart and lung.

The protein localises to the cell membrane. Receptor for ADP. Coupled to G(i)-proteins. May play a role in hematopoiesis and the immune system. The sequence is that of P2Y purinoceptor 13 (P2ry13) from Rattus norvegicus (Rat).